The chain runs to 186 residues: Elongation factor P (186 aa).

It belongs to the elongation factor P family.

Its subcellular location is the cytoplasm. It functions in the pathway protein biosynthesis; polypeptide chain elongation. Functionally, involved in peptide bond synthesis. Stimulates efficient translation and peptide-bond synthesis on native or reconstituted 70S ribosomes in vitro. Probably functions indirectly by altering the affinity of the ribosome for aminoacyl-tRNA, thus increasing their reactivity as acceptors for peptidyl transferase. The protein is Elongation factor P of Neisseria meningitidis serogroup A / serotype 4A (strain DSM 15465 / Z2491).